A 128-amino-acid chain; its full sequence is MTGFRDQLGVHAQALVLRETRNNLLTSNIANAATPHYKARDIDFGAELARASGNGTVRTTEARHFAAGGPAARGEALYRDPVSPSLDGNTVEMAVEQMEFAENTLRYQTSLALLNRRISGLMTAIKGE.

The protein belongs to the flagella basal body rod proteins family. The basal body constitutes a major portion of the flagellar organelle and consists of a number of rings mounted on a central rod. In Gram-negative bacteria, at least four rings, L, P, S and M are present, whereas Gram-positive bacteria lack the L and P rings. The rod consists of about 26 subunits of FlgG in the distal portion, and FlgB, FlgC and FlgF build up the proximal portion of the rod with about 6 subunits each. Rod assembly occurs by export via the flagellum-specific pathway of its constituent proteins and by their incorporation into the rod structure in the probable order of FlgB, FlgC, FlgF and FlgG. Another protein, FliE, also assembles onto the stable rod structure.

The protein localises to the bacterial flagellum basal body. Structural component of flagellum, the bacterial motility apparatus. Part of the rod structure of flagellar basal body. The protein is Flagellar basal body rod protein FlgB of Cereibacter sphaeroides (Rhodobacter sphaeroides).